We begin with the raw amino-acid sequence, 278 residues long: Orotidine 5'-phosphate decarboxylase (278 aa).

Lys95 (proton donor) is an active-site residue.

This sequence belongs to the OMP decarboxylase family. Type 2 subfamily.

The catalysed reaction is orotidine 5'-phosphate + H(+) = UMP + CO2. It functions in the pathway pyrimidine metabolism; UMP biosynthesis via de novo pathway; UMP from orotate: step 2/2. The protein is Orotidine 5'-phosphate decarboxylase of Mycobacterium marinum (strain ATCC BAA-535 / M).